A 469-amino-acid chain; its full sequence is RuvB-like helicase 2 (469 aa).

Position 74–81 (74–81 (GPPSTGKT)) interacts with ATP.

The protein belongs to the RuvB family. May form heterododecamers with RVB1. Component of the SWR1 chromatin remodeling complex, the INO80 chromatin remodeling complex, and of the R2TP complex.

Its subcellular location is the nucleus. The catalysed reaction is ATP + H2O = ADP + phosphate + H(+). Its function is as follows. DNA helicase which participates in several chromatin remodeling complexes, including the SWR1 and the INO80 complexes. The SWR1 complex mediates the ATP-dependent exchange of histone H2A for the H2A variant HZT1 leading to transcriptional regulation of selected genes by chromatin remodeling. The INO80 complex remodels chromatin by shifting nucleosomes and is involved in DNA repair. Also involved in pre-rRNA processing. The sequence is that of RuvB-like helicase 2 (RVB2) from Eremothecium gossypii (strain ATCC 10895 / CBS 109.51 / FGSC 9923 / NRRL Y-1056) (Yeast).